The chain runs to 84 residues: MAHKKGASSTRNGRDSNAQRLGVKRFGGQAVNAGEILVRQRGTHFHPGAGVGRGGDDTLFALQAGAVQFGTHRGRKVVNIVPVA.

The tract at residues 1 to 22 is disordered; the sequence is MAHKKGASSTRNGRDSNAQRLG. Positions 7 to 19 are enriched in polar residues; that stretch reads ASSTRNGRDSNAQ.

The protein belongs to the bacterial ribosomal protein bL27 family.

This chain is Large ribosomal subunit protein bL27, found in Streptomyces coelicolor (strain ATCC BAA-471 / A3(2) / M145).